We begin with the raw amino-acid sequence, 200 residues long: uncharacterized protein (200 aa).

The signal sequence occupies residues 1–24 (MAIDKLPLLLFLSILLCLNRPVLS). N44, N72, N99, N124, and N135 each carry an N-linked (GlcNAc...) asparagine glycan. S174 is lipidated: GPI-anchor amidated serine. Positions 175 to 200 (NGFTFGIGLVSYLVIFMYSSFCFFLF) are cleaved as a propeptide — removed in mature form.

Belongs to the UPF0277 family.

Its subcellular location is the cell membrane. This is an uncharacterized protein from Arabidopsis thaliana (Mouse-ear cress).